The following is a 227-amino-acid chain: Thymidylate synthase (227 aa).

Residue 89-90 coordinates dUMP; sequence RR. The Nucleophile role is filled by cysteine 109. DUMP is bound by residues 129–132, asparagine 140, and 170–172; these read RSND and HVY. (6R)-5,10-methylene-5,6,7,8-tetrahydrofolate is bound at residue aspartate 132.

Belongs to the thymidylate synthase family. Bacterial-type ThyA subfamily. In terms of assembly, homodimer.

Its subcellular location is the cytoplasm. It catalyses the reaction dUMP + (6R)-5,10-methylene-5,6,7,8-tetrahydrofolate = 7,8-dihydrofolate + dTMP. The protein operates within pyrimidine metabolism; dTTP biosynthesis. Catalyzes the reductive methylation of 2'-deoxyuridine-5'-monophosphate (dUMP) to 2'-deoxythymidine-5'-monophosphate (dTMP) while utilizing 5,10-methylenetetrahydrofolate (mTHF) as the methyl donor and reductant in the reaction, yielding dihydrofolate (DHF) as a by-product. This enzymatic reaction provides an intracellular de novo source of dTMP, an essential precursor for DNA biosynthesis. The polypeptide is Thymidylate synthase (Bacillus atrophaeus).